Consider the following 161-residue polypeptide: Protein-export protein SecB (161 aa).

It belongs to the SecB family. Homotetramer, a dimer of dimers. One homotetramer interacts with 1 SecA dimer.

The protein resides in the cytoplasm. In terms of biological role, one of the proteins required for the normal export of preproteins out of the cell cytoplasm. It is a molecular chaperone that binds to a subset of precursor proteins, maintaining them in a translocation-competent state. It also specifically binds to its receptor SecA. The chain is Protein-export protein SecB from Shewanella baltica (strain OS155 / ATCC BAA-1091).